The chain runs to 366 residues: Ribosomal RNA large subunit methyltransferase M (366 aa).

S-adenosyl-L-methionine is bound by residues Ser188, 221-224 (CPGG), Asp240, Asp260, and Asp277. The active-site Proton acceptor is Lys306.

The protein belongs to the class I-like SAM-binding methyltransferase superfamily. RNA methyltransferase RlmE family. RlmM subfamily. In terms of assembly, monomer.

The protein localises to the cytoplasm. It carries out the reaction cytidine(2498) in 23S rRNA + S-adenosyl-L-methionine = 2'-O-methylcytidine(2498) in 23S rRNA + S-adenosyl-L-homocysteine + H(+). Catalyzes the 2'-O-methylation at nucleotide C2498 in 23S rRNA. This is Ribosomal RNA large subunit methyltransferase M from Klebsiella pneumoniae (strain 342).